We begin with the raw amino-acid sequence, 362 residues long: RING-H2 finger protein ATL52 (362 aa).

The chain crosses the membrane as a helical span at residues 58-78 (LIALIGILTSALILVSYYTLI). The RING-type; atypical zinc-finger motif lies at 142 to 184 (CSVCLSEFEENESLRLLPKCNHAFHLPCIDTWLKSHSNCPLCR). Disordered regions lie at residues 252–271 (DARS…DEDS) and 296–333 (EDEE…RSGG). Residues 309–319 (QRREEGEDGDG) are compositionally biased toward basic and acidic residues.

This sequence belongs to the RING-type zinc finger family. ATL subfamily. In terms of tissue distribution, expressed in flowers.

The protein resides in the membrane. It catalyses the reaction S-ubiquitinyl-[E2 ubiquitin-conjugating enzyme]-L-cysteine + [acceptor protein]-L-lysine = [E2 ubiquitin-conjugating enzyme]-L-cysteine + N(6)-ubiquitinyl-[acceptor protein]-L-lysine.. The protein operates within protein modification; protein ubiquitination. The sequence is that of RING-H2 finger protein ATL52 (ATL52) from Arabidopsis thaliana (Mouse-ear cress).